The primary structure comprises 70 residues: Antimicrobial peptide VpCT1 (70 aa).

A signal peptide spans 1-23 (MKNQFAVLLVALVLLQLFSQSEA). Leucine 36 carries the leucine amide modification. Residues 37–70 (GKRGLRNFDLEQMDDTYEPELSEADLRYLQDLLR) constitute a propeptide that is removed on maturation.

Belongs to the non-disulfide-bridged peptide (NDBP) superfamily. Short antimicrobial peptide (group 4) family. Expressed by the venom gland.

The protein resides in the secreted. It localises to the target cell membrane. Its function is as follows. Antimicrobial peptide with potent activity against bacteria S.aureus (MIC=4.7 uM) and E.coli (MIC=31.5 uM), and pathogenic yeasts C.albicans (MIC=25 uM) and C.glabrata (MIC=12.5 uM). Is not very effective against P.aeruginosa (MIC=150 and &gt;300 uM). Also provokes moderate hemolysis on human erythrocytes (HC(50)=10.5 uM). This chain is Antimicrobial peptide VpCT1, found in Mesomexovis punctatus (Scorpion).